Here is a 249-residue protein sequence, read N- to C-terminus: Diaminopimelate epimerase (249 aa).

Positions 11 and 60 each coordinate substrate. The active-site Proton donor is cysteine 69. Substrate-binding positions include 70–71 (GN), asparagine 164, and 182–183 (ER). The active-site Proton acceptor is the cysteine 192. Substrate is bound at residue 193 to 194 (GT).

This sequence belongs to the diaminopimelate epimerase family. As to quaternary structure, homodimer.

It is found in the cytoplasm. The catalysed reaction is (2S,6S)-2,6-diaminopimelate = meso-2,6-diaminopimelate. The protein operates within amino-acid biosynthesis; L-lysine biosynthesis via DAP pathway; DL-2,6-diaminopimelate from LL-2,6-diaminopimelate: step 1/1. Its function is as follows. Catalyzes the stereoinversion of LL-2,6-diaminopimelate (L,L-DAP) to meso-diaminopimelate (meso-DAP), a precursor of L-lysine and an essential component of the bacterial peptidoglycan. In Campylobacter lari (strain RM2100 / D67 / ATCC BAA-1060), this protein is Diaminopimelate epimerase.